A 568-amino-acid polypeptide reads, in one-letter code: PCNA-interacting partner (568 aa).

The segment at 442 to 555 (QIPTCVHPAP…RNNKAVSKKL (114 aa)) is disordered. Polar residues predominate over residues 488 to 500 (NAWNQTGGKSTQP). Basic and acidic residues predominate over residues 515–527 (ANRECTEQGREEN).

It belongs to the PARI family.

Its subcellular location is the cytoplasm. The protein resides in the nucleus. In terms of biological role, required to suppress inappropriate homologous recombination, thereby playing a central role DNA repair and in the maintenance of genomic stability. The sequence is that of PCNA-interacting partner (parpbp) from Danio rerio (Zebrafish).